A 338-amino-acid polypeptide reads, in one-letter code: Tetraacyldisaccharide 4'-kinase (338 aa).

Position 61 to 68 (61 to 68 (TLGGTGKT)) interacts with ATP.

It belongs to the LpxK family.

The catalysed reaction is a lipid A disaccharide + ATP = a lipid IVA + ADP + H(+). It participates in glycolipid biosynthesis; lipid IV(A) biosynthesis; lipid IV(A) from (3R)-3-hydroxytetradecanoyl-[acyl-carrier-protein] and UDP-N-acetyl-alpha-D-glucosamine: step 6/6. In terms of biological role, transfers the gamma-phosphate of ATP to the 4'-position of a tetraacyldisaccharide 1-phosphate intermediate (termed DS-1-P) to form tetraacyldisaccharide 1,4'-bis-phosphate (lipid IVA). This is Tetraacyldisaccharide 4'-kinase from Nitrosococcus oceani (strain ATCC 19707 / BCRC 17464 / JCM 30415 / NCIMB 11848 / C-107).